A 342-amino-acid polypeptide reads, in one-letter code: Nuclear distribution protein nudE homolog 1 (342 aa).

The stretch at 45 to 189 forms a coiled coil; that stretch reads REYEAELETQ…ELAVQQKQEK (145 aa). The interaction with PAFAH1B1 stretch occupies residues 89 to 157; it reads EWYRQVSALE…ERNAFLESEL (69 aa). 2 disordered regions span residues 182–203 and 320–342; these read AVQQ…TERT and GTRP…KMLL. Residues 322 to 342 show a composition bias toward polar residues; that stretch reads RPSSTPGPMSHPSQSVVKMLL.

The protein belongs to the nudE family. As to quaternary structure, self-associates. Interacts with PAFAH1B1. In terms of processing, phosphorylated in mitosis.

The protein resides in the cytoplasm. The protein localises to the cytoskeleton. Its subcellular location is the microtubule organizing center. It localises to the centrosome. It is found in the spindle. The protein resides in the chromosome. The protein localises to the centromere. Its subcellular location is the kinetochore. It localises to the cleavage furrow. It is found in the cytoplasmic vesicle membrane. Its function is as follows. Required for centrosome duplication and formation and function of the mitotic spindle. The chain is Nuclear distribution protein nudE homolog 1 (NDE1) from Gallus gallus (Chicken).